The sequence spans 173 residues: Photosystem I assembly protein Ycf3 (173 aa).

TPR repeat units lie at residues A35–Q68, G72–Q105, and G120–G153.

The protein belongs to the Ycf3 family.

It is found in the cellular thylakoid membrane. Functionally, essential for the assembly of the photosystem I (PSI) complex. May act as a chaperone-like factor to guide the assembly of the PSI subunits. The protein is Photosystem I assembly protein Ycf3 of Prochlorococcus marinus (strain NATL1A).